The sequence spans 415 residues: ATP-dependent RNA helicase RhlB (415 aa).

Positions 9 to 37 (QRFSDLSLHPIVRDTLAKKGFDFCTPIQA) match the Q motif motif. Positions 40–218 (LPISLNGRDV…FEDMNDPEYI (179 aa)) constitute a Helicase ATP-binding domain. 53 to 60 (AQTGTGKT) contacts ATP. The DEAD box motif lies at 164–167 (DEAD). The Helicase C-terminal domain occupies 241–389 (DKMALLLTLM…VSQYETEALL (149 aa)).

The protein belongs to the DEAD box helicase family. RhlB subfamily. Component of the RNA degradosome, which is a multiprotein complex involved in RNA processing and mRNA degradation.

The protein resides in the cytoplasm. The enzyme catalyses ATP + H2O = ADP + phosphate + H(+). DEAD-box RNA helicase involved in RNA degradation. Has RNA-dependent ATPase activity and unwinds double-stranded RNA. This Haemophilus influenzae (strain PittEE) protein is ATP-dependent RNA helicase RhlB.